A 38-amino-acid chain; its full sequence is Large ribosomal subunit protein bL36 (38 aa).

This sequence belongs to the bacterial ribosomal protein bL36 family.

In Baumannia cicadellinicola subsp. Homalodisca coagulata, this protein is Large ribosomal subunit protein bL36.